Reading from the N-terminus, the 509-residue chain is MWRLTGILGRALPRLLGPGFRGITPKPTSSDGPQTTSTTLPLPRVNFDRSGSHGSKRNRDPKCCGWKEAFHWMSAHVSPNTLRDAVSWGTLAVLALHLARQIHFHAPLVAGPQSAERCSWHSPLYRFLSSSWWHPHSSLRRHVLPSPDCPAPRNTGLREPRLGQEEPAARSQGLPSDSSLKPGLLNLPEEEPSDFGFLNASRDFTSQAKAAEAGPPGGKNEQDKPKALPLEEAVTSIQQLFQLSVAIAFNFLGTENIKTGDYTAAFSYFQKAADRGYSKAQYNVGLCLEHGRGTPRDLSKAVLFYHLAAVQGHSLAQYRYARCLLQSPGSMSDPERQRAVSLLKQAADSGLTEAQAFLGVLFTKEPHLDEQKAVKYFWLAASNGDSQSRFHLGICYEKGLGVQRNLGEAVKCYQKSAAMGNEPAQERLRTLFNVEAAGPSHLAIGLKSFSSPSLCSLNTFLAGASGLPHASSTGNLGLLCRSGHLGTSHGAPSRAMPSLERSLVRLGFG.

Residues 1–23 (MWRLTGILGRALPRLLGPGFRGI) constitute a mitochondrion transit peptide. Disordered stretches follow at residues 19–60 (GFRG…RNRD) and 143–185 (VLPS…PGLL). Positions 24-101 (TPKPTSSDGP…AVLALHLARQ (78 aa)) are cleaved as a propeptide — extended MTS. A compositionally biased stretch (polar residues) spans 26–40 (KPTSSDGPQTTSTTL). 2 stretches are compositionally biased toward basic and acidic residues: residues 46–60 (NFDRSGSHGSKRNRD) and 156–168 (GLREPRLGQEEPA). 7 TPR repeats span residues 213–245 (AGPPGGKNEQDKPKALPLEEAVTSIQQLFQLSV), 246–278 (AIAFNFLGTENIKTGDYTAAFSYFQKAADRGYS), 279–313 (KAQYNVGLCLEHGRGTPRDLSKAVLFYHLAAVQGH), 314–351 (SLAQYRYARCLLQSPGSMSDPERQRAVSLLKQAADSGL), 352–385 (TEAQAFLGVLFTKEPHLDEQKAVKYFWLAASNGD), 386–423 (SQSRFHLGICYEKGLGVQRNLGEAVKCYQKSAAMGNEP), and 470–498 (ASSTGNLGLLCRSGHLGTSHGAPSRAMPS). Positions 307-326 (LAAVQGHSLAQYRYARCLLQ) match the SIFI-degron motif.

This sequence belongs to the DELE1 family. In terms of assembly, interacts with DAP3. Interacts (via TPR repeats) with EIF2AK1/HRI; activating the protein kinase activity of EIF2AK1/HRI, thereby promoting the integrated stress response (ISR). As to quaternary structure, homooctamer; oligomerization is required to activate EIF2AK1/HRI. Interacts (via TPR repeats) with EIF2AK1/HRI; activating the protein kinase activity of EIF2AK1/HRI, thereby promoting the integrated stress response (ISR). Post-translationally, unstable protein in absence of stress: imported in the mitochondrial matrix following processing by the mitochondrial-processing peptidase (MPP), where it is degraded by LONP1. Stabilized in response to iron deficiency: iron deficiency impairs mitochondrial import, promoting localization at the mitochondrial surface and stabilization. Cleaved by OMA1 in response to mitochondrial stress, generating the DAP3-binding cell death enhancer 1 short form (DELE1(S) or S-DELE1) that accumulates in the cytosol and activates the protein kinase activity of EIF2AK1/HRI. Protein cleavage by OMA1 can take place at different positions, and apparently does not require a specific sequence motif. Ubiquitinated and degraded by the SIFI complex once the mitochondrial stress has been resolved, thereby providing stress response silencing. Within the SIFI complex, UBR4 initiates ubiquitin chain that are further elongated or branched by KCMF1.

The protein resides in the mitochondrion. It localises to the mitochondrion outer membrane. Its subcellular location is the mitochondrion inner membrane. The protein localises to the cytoplasm. It is found in the cytosol. Functionally, protein kinase activator that acts as a key activator of the integrated stress response (ISR) following various stresses, such as iron deficiency, mitochondrial stress or mitochondrial DNA breaks. Detects impaired protein import and processing in mitochondria, activating the ISR. May also required for the induction of death receptor-mediated apoptosis through the regulation of caspase activation. In terms of biological role, protein kinase activator that activates the ISR in response to iron deficiency: iron deficiency impairs mitochondrial import, promoting DELE1 localization at the mitochondrial surface, where it binds and activates EIF2AK1/HRI to trigger the ISR. Protein kinase activator generated by protein cleavage in response to mitochondrial stress, which accumulates in the cytosol and specifically binds to and activates the protein kinase activity of EIF2AK1/HRI. It thereby activates the integrated stress response (ISR): EIF2AK1/HRI activation promotes eIF-2-alpha (EIF2S1) phosphorylation, leading to a decrease in global protein synthesis and the induction of selected genes, including the transcription factor ATF4, the master transcriptional regulator of the ISR. Also acts as an activator of PRKN-independent mitophagy: activates the protein kinase activity of EIF2AK1/HRI in response to mitochondrial damage, promoting eIF-2-alpha (EIF2S1) phosphorylation, leading to mitochondrial localization of EIF2S1 followed by induction of mitophagy. The sequence is that of DAP3-binding cell death enhancer 1 from Rattus norvegicus (Rat).